A 308-amino-acid chain; its full sequence is High-affinity branched-chain amino acid transport system permease protein LivH (308 aa).

Topologically, residues 1–21 (MSEQFLYFLQQMFNGVTLGST) are cytoplasmic. A helical membrane pass occupies residues 22 to 42 (YALIAIGYTMVYGIIGMINFA). The Periplasmic portion of the chain corresponds to 43-45 (HGE). Residues 46–66 (VYMIGSYVSFMIIAALMMMGI) traverse the membrane as a helical segment. At 67–68 (DT) the chain is on the cytoplasmic side. Residues 69–89 (GWLLVAAGFVGAIVIASAYGW) traverse the membrane as a helical segment. The Periplasmic portion of the chain corresponds to 90–104 (SIERVAYRPVRNSKR). A helical membrane pass occupies residues 105–125 (LIALISAIGMSIFLQNYVSLT). The Cytoplasmic portion of the chain corresponds to 126 to 154 (EGSRDVALPSLFNGQWVVGHSENFSASIT). The chain crosses the membrane as a helical span at residues 155–175 (TMQAVIWIVTFLAMLALTIFI). Over 176–203 (RYSRMGRACRACAEDLKMASLLGINTDR) the chain is Periplasmic. Residues 204 to 224 (VIALTFVIGAAMAAVAGVLLG) form a helical membrane-spanning segment. At 225–245 (QFYGVINPYIGFMAGMKAFTA) the chain is on the cytoplasmic side. Residues 246–266 (AVLGGIGSIPGAMIGGLILGI) form a helical membrane-spanning segment. The Periplasmic segment spans residues 267–280 (AEALSSAYLSTEYK). A helical membrane pass occupies residues 281–301 (DVVSFALLILVLLVMPTGILG). Residues 302 to 308 (RPEVEKV) lie on the Cytoplasmic side of the membrane.

Belongs to the binding-protein-dependent transport system permease family. LivHM subfamily.

It is found in the cell inner membrane. Part of the binding-protein-dependent transport system for branched-chain amino acids. Probably responsible for the translocation of the substrates across the membrane. The sequence is that of High-affinity branched-chain amino acid transport system permease protein LivH (livH) from Escherichia coli O157:H7.